Reading from the N-terminus, the 277-residue chain is MENVGVGMPFYDLGQTRVYPLLSDFHDLSAERYPVGFMDLLGVHRHTPTHTPLMHFPTTPNSSSSEAVNGDDEEEEDGEEQQHKTKKRFKFTKMSRKQTKKKVPKVSFITRSEVLHLDDGYKWRKYGQKPVKDSPFPRNYYRCTTTWCDVKKRVERSFSDPSSVITTYEGQHTHPRPLLIMPKEGSSPSNGSASRAHIGLPTLPPQLLDYNNQQQQAPSSFGTEYINRQEKGINHDDDDDHVVKKSRTRDLLDGAGLVKDHGLLQDVVPSHIIKEEY.

The tract at residues Thr51–Arg96 is disordered. Positions Thr58–Ala67 are enriched in polar residues. Over residues Asn69–Glu79 the composition is skewed to acidic residues. Positions Lys84–Arg96 are enriched in basic residues. The WRKY DNA-binding region spans Ser112–Pro177. Residues Lys183–Gln206 are disordered.

This sequence belongs to the WRKY group II-c family.

It localises to the nucleus. Transcription factor. Interacts specifically with the W box (5'-(T)TGAC[CT]-3'), a frequently occurring elicitor-responsive cis-acting element. The chain is WRKY transcription factor 68 (WRKY68) from Arabidopsis thaliana (Mouse-ear cress).